The chain runs to 508 residues: ATP synthase subunit alpha, mitochondrial (508 aa).

171–178 provides a ligand contact to ATP; it reads GDRQTGKT.

Belongs to the ATPase alpha/beta chains family. F-type ATPases have 2 components, CF(1) - the catalytic core - and CF(0) - the membrane proton channel. CF(1) has five subunits: alpha(3), beta(3), gamma(1), delta(1), epsilon(1). CF(0) has three main subunits: a, b and c.

The protein resides in the mitochondrion. It is found in the mitochondrion inner membrane. Functionally, mitochondrial membrane ATP synthase (F(1)F(0) ATP synthase or Complex V) produces ATP from ADP in the presence of a proton gradient across the membrane which is generated by electron transport complexes of the respiratory chain. F-type ATPases consist of two structural domains, F(1) - containing the extramembraneous catalytic core, and F(0) - containing the membrane proton channel, linked together by a central stalk and a peripheral stalk. During catalysis, ATP synthesis in the catalytic domain of F(1) is coupled via a rotary mechanism of the central stalk subunits to proton translocation. Subunits alpha and beta form the catalytic core in F(1). Rotation of the central stalk against the surrounding alpha(3)beta(3) subunits leads to hydrolysis of ATP in three separate catalytic sites on the beta subunits. Subunit alpha does not bear the catalytic high-affinity ATP-binding sites. This is ATP synthase subunit alpha, mitochondrial (ATPA) from Zea mays (Maize).